Consider the following 95-residue polypeptide: Pyrimidine/purine nucleoside phosphorylase (95 aa).

It belongs to the nucleoside phosphorylase PpnP family.

The enzyme catalyses a purine D-ribonucleoside + phosphate = a purine nucleobase + alpha-D-ribose 1-phosphate. It catalyses the reaction adenosine + phosphate = alpha-D-ribose 1-phosphate + adenine. The catalysed reaction is cytidine + phosphate = cytosine + alpha-D-ribose 1-phosphate. It carries out the reaction guanosine + phosphate = alpha-D-ribose 1-phosphate + guanine. The enzyme catalyses inosine + phosphate = alpha-D-ribose 1-phosphate + hypoxanthine. It catalyses the reaction thymidine + phosphate = 2-deoxy-alpha-D-ribose 1-phosphate + thymine. The catalysed reaction is uridine + phosphate = alpha-D-ribose 1-phosphate + uracil. It carries out the reaction xanthosine + phosphate = alpha-D-ribose 1-phosphate + xanthine. Its function is as follows. Catalyzes the phosphorolysis of diverse nucleosides, yielding D-ribose 1-phosphate and the respective free bases. Can use uridine, adenosine, guanosine, cytidine, thymidine, inosine and xanthosine as substrates. Also catalyzes the reverse reactions. This Edwardsiella ictaluri (strain 93-146) protein is Pyrimidine/purine nucleoside phosphorylase.